Here is a 517-residue protein sequence, read N- to C-terminus: ATP synthase subunit alpha (517 aa).

174–181 (GDRQTGKT) is an ATP binding site.

It belongs to the ATPase alpha/beta chains family. F-type ATPases have 2 components, CF(1) - the catalytic core - and CF(0) - the membrane proton channel. CF(1) has five subunits: alpha(3), beta(3), gamma(1), delta(1), epsilon(1). CF(0) has three main subunits: a(1), b(2) and c(9-12). The alpha and beta chains form an alternating ring which encloses part of the gamma chain. CF(1) is attached to CF(0) by a central stalk formed by the gamma and epsilon chains, while a peripheral stalk is formed by the delta and b chains.

The protein localises to the cell inner membrane. The enzyme catalyses ATP + H2O + 4 H(+)(in) = ADP + phosphate + 5 H(+)(out). Produces ATP from ADP in the presence of a proton gradient across the membrane. The alpha chain is a regulatory subunit. In Delftia acidovorans (strain DSM 14801 / SPH-1), this protein is ATP synthase subunit alpha.